Reading from the N-terminus, the 695-residue chain is Probable glutamine--tRNA ligase (695 aa).

The 'HIGH' region motif lies at 201–211; the sequence is PEPNGILHIGH. Residues 202–204 and 208–214 contribute to the ATP site; these read EPN and HIGHAKA. L-glutamine contacts are provided by Asp234 and Tyr391. ATP-binding positions include Thr410, 439-440, and 447-449; these read RL and LSK. Positions 446–450 match the 'KMSKS' region motif; the sequence is VLSKR.

It belongs to the class-I aminoacyl-tRNA synthetase family.

The catalysed reaction is tRNA(Gln) + L-glutamine + ATP = L-glutaminyl-tRNA(Gln) + AMP + diphosphate. In Vairimorpha ceranae (strain BRL01) (Microsporidian parasite), this protein is Probable glutamine--tRNA ligase.